A 458-amino-acid chain; its full sequence is Phosphoglucosamine mutase (458 aa).

Ser106 serves as the catalytic Phosphoserine intermediate. Residues Ser106, Asp247, Asp249, and Asp251 each contribute to the Mg(2+) site. At Ser106 the chain carries Phosphoserine.

The protein belongs to the phosphohexose mutase family. Mg(2+) serves as cofactor. Activated by phosphorylation.

The catalysed reaction is alpha-D-glucosamine 1-phosphate = D-glucosamine 6-phosphate. In terms of biological role, catalyzes the conversion of glucosamine-6-phosphate to glucosamine-1-phosphate. The sequence is that of Phosphoglucosamine mutase from Chlamydia trachomatis serovar L2 (strain ATCC VR-902B / DSM 19102 / 434/Bu).